The chain runs to 510 residues: ATP synthase subunit alpha (510 aa).

169-176 (GDRQTGKT) serves as a coordination point for ATP.

It belongs to the ATPase alpha/beta chains family. F-type ATPases have 2 components, CF(1) - the catalytic core - and CF(0) - the membrane proton channel. CF(1) has five subunits: alpha(3), beta(3), gamma(1), delta(1), epsilon(1). CF(0) has three main subunits: a(1), b(2) and c(9-12). The alpha and beta chains form an alternating ring which encloses part of the gamma chain. CF(1) is attached to CF(0) by a central stalk formed by the gamma and epsilon chains, while a peripheral stalk is formed by the delta and b chains.

It is found in the cell inner membrane. The enzyme catalyses ATP + H2O + 4 H(+)(in) = ADP + phosphate + 5 H(+)(out). Its function is as follows. Produces ATP from ADP in the presence of a proton gradient across the membrane. The alpha chain is a regulatory subunit. The chain is ATP synthase subunit alpha from Rickettsia massiliae (strain Mtu5).